Here is a 150-residue protein sequence, read N- to C-terminus: 3-dehydroquinate dehydratase (150 aa).

The Proton acceptor role is filled by Tyr22. 3 residues coordinate substrate: Asn73, His79, and Asp86. The active-site Proton donor is His99. Residues 100–101 (LT) and Arg110 contribute to the substrate site.

This sequence belongs to the type-II 3-dehydroquinase family. As to quaternary structure, homododecamer.

The enzyme catalyses 3-dehydroquinate = 3-dehydroshikimate + H2O. It functions in the pathway metabolic intermediate biosynthesis; chorismate biosynthesis; chorismate from D-erythrose 4-phosphate and phosphoenolpyruvate: step 3/7. Catalyzes a trans-dehydration via an enolate intermediate. In Desulforudis audaxviator (strain MP104C), this protein is 3-dehydroquinate dehydratase.